The chain runs to 434 residues: Alpha-enolase (434 aa).

S2 carries the post-translational modification N-acetylserine. K5 carries the post-translational modification N6-acetyllysine. S27 carries the post-translational modification Phosphoserine. The interval 31 to 38 is epitope recognized by CAR and healthy patient antibodies; the sequence is FRAAVPSG. S40 provides a ligand contact to Mg(2+). Y44 carries the phosphotyrosine modification. The segment at 56 to 63 is epitope recognized by CAR antibodies; sequence RYMGKGVS. K60 is modified (N6-acetyllysine; alternate). An N6-succinyllysine; alternate modification is found at K60. K64 and K71 each carry N6-acetyllysine. The residue at position 89 (K89) is an N6-acetyllysine; alternate. K89 carries the post-translational modification N6-succinyllysine; alternate. N6-acetyllysine is present on residues K92 and K126. The interval 97 to 237 is required for repression of c-myc promoter activity; it reads MDGTENKSKF…KTAIGKAGYT (141 aa). Substrate-binding residues include H158 and E167. N6-acetyllysine is present on residues K193 and K199. An N6-acetyllysine; alternate modification is found at K202. Residue K202 forms a Glycyl lysine isopeptide (Lys-Gly) (interchain with G-Cter in SUMO2); alternate linkage. The Proton donor role is filled by E210. Residues K228 and K233 each carry the N6-acetyllysine; alternate modification. Position 228 is an N6-succinyllysine; alternate (K228). An N6-(2-hydroxyisobutyryl)lysine; alternate modification is found at K228. N6-malonyllysine; alternate is present on K233. Position 245 (D245) interacts with Mg(2+). Residue S254 is modified to Phosphoserine. K256 is modified (N6-acetyllysine). Residues S263 and S272 each carry the phosphoserine modification. K281 is subject to N6-acetyllysine; alternate. K281 is subject to N6-(2-hydroxyisobutyryl)lysine; alternate. The residue at position 285 (K285) is an N6-acetyllysine. Y287 is modified (phosphotyrosine). S291 is modified (phosphoserine). Mg(2+)-binding residues include E293 and D318. Substrate contacts are provided by E293 and D318. 2 positions are modified to N6-acetyllysine: K335 and K343. Residue K343 is the Proton acceptor of the active site. Residues 370 to 373 and K394 contribute to the substrate site; that span reads SHRS. Residues 405 to 434 form a required for interaction with PLG region; it reads AKYNQLLRIEEELGSKAKFAGRNFRNPLAK. K406 is modified (N6-acetyllysine). K420 bears the N6-acetyllysine; alternate mark. At K420 the chain carries N6-succinyllysine; alternate. K420 carries the N6-malonyllysine; alternate modification.

It belongs to the enolase family. In terms of assembly, mammalian enolase is composed of 3 isozyme subunits, alpha, beta and gamma, which can form homodimers or heterodimers which are cell-type and development-specific. ENO1 interacts with PLG in the neuronal plasma membrane and promotes its activation. The C-terminal lysine is required for this binding. Isoform MBP-1 interacts with TRAPPC2B. Interacts with ENO4 and PGAM2. Interacts with CMTM6. Mg(2+) is required as a cofactor. In terms of processing, ISGylated. Post-translationally, lysine 2-hydroxyisobutyrylation (Khib) by p300/EP300 activates the phosphopyruvate hydratase activity. As to expression, the alpha/alpha homodimer is expressed in embryo and in most adult tissues. The alpha/beta heterodimer and the beta/beta homodimer are found in striated muscle, and the alpha/gamma heterodimer and the gamma/gamma homodimer in neurons.

The protein localises to the cytoplasm. Its subcellular location is the cell membrane. The protein resides in the myofibril. It localises to the sarcomere. It is found in the m line. The protein localises to the nucleus. The catalysed reaction is (2R)-2-phosphoglycerate = phosphoenolpyruvate + H2O. The protein operates within carbohydrate degradation; glycolysis; pyruvate from D-glyceraldehyde 3-phosphate: step 4/5. In terms of biological role, glycolytic enzyme the catalyzes the conversion of 2-phosphoglycerate to phosphoenolpyruvate. In addition to glycolysis, involved in various processes such as growth control, hypoxia tolerance and allergic responses. May also function in the intravascular and pericellular fibrinolytic system due to its ability to serve as a receptor and activator of plasminogen on the cell surface of several cell-types such as leukocytes and neurons. Stimulates immunoglobulin production. Binds to the myc promoter and acts as a transcriptional repressor. May be a tumor suppressor. The polypeptide is Alpha-enolase (ENO1) (Homo sapiens (Human)).